Here is a 495-residue protein sequence, read N- to C-terminus: Serine/threonine-protein phosphatase 2A regulatory subunit sur-6 (495 aa).

Residues 1-27 form a disordered region; the sequence is MVMEVDEPAVAATTSQNQPQEHANDFD. Over residues 12-21 the composition is skewed to polar residues; that stretch reads ATTSQNQPQE. 6 WD repeats span residues 64 to 103, 130 to 171, 215 to 253, 264 to 304, 323 to 361, and 378 to 419; these read TEAD…KYVK, EIDE…RKIG, AHTY…ESFN, ELTE…LCDA, EIIA…QPVE, and ENDS…DAKT. Residues 439–459 form a disordered region; it reads SAKRKRNNLSSSGETTEEDLS. One copy of the WD 7 repeat lies at 464–495; it reads QFDRKILHTAWHPKDNIIALAATNNLYIFSDV.

This sequence belongs to the phosphatase 2A regulatory subunit B family. Part of a complex consisting of a common heterodimeric core enzyme, composed of catalytic subunit let-92 and constant regulatory subunit paa-1, that associates with a variety of regulatory subunits which confer distinct properties to the holoenzyme. Interacts with let-92.

The protein localises to the cytoplasm. Its function is as follows. Probable regulatory subunit of serine/threonine phosphatase let-92. Together with let-92 and constant regulatory subunit paa-1, positively regulates centriole duplication during early embryonic cell divisions by preventing the degradation of sas-5 and kinase zyg-1. In addition, during vulva development, may play a role with phosphatase let-92 and regulatory subunit paa-1 in the induction of vulva cell precursors by positively regulating let-60/Ras-MAP kinase signaling, probably by promoting lin-45 activation. In intestinal epithelial cells, may play a role in the late secretory pathway probably by regulating the exocyst, a protein complex involved in targeting secretory vesicles to the plasma membrane. This Caenorhabditis elegans protein is Serine/threonine-protein phosphatase 2A regulatory subunit sur-6.